A 243-amino-acid chain; its full sequence is MSKQKKSEIVNRFRKRFDTKMTELGFTYQNIDLYQQAFSHSSFINDFNMNRLDHNERLEFLGDAVLELTVSRYLFDKHPNLPEGNLTKMRATIVCEPSLVIFANKIGLNEMILLGKGEEKTGGRTRPSLISDAFEAFIGALYLDQGLDIVWKFAEKVIFPHVEQNELLGVVDFKTQFQEYVHQQNKGDVTYNLIKEEGPAHHRLFTSEVILQGEAIAEGKGKTKKESEQRAAESAYKQLKQIK.

The RNase III domain occupies 10–146 (VNRFRKRFDT…FIGALYLDQG (137 aa)). A Mg(2+)-binding site is contributed by Glu-59. Asp-63 is an active-site residue. Positions 132 and 135 each coordinate Mg(2+). Glu-135 is an active-site residue. Residues 172–241 (DFKTQFQEYV…AESAYKQLKQ (70 aa)) form the DRBM domain. Over residues 219–231 (GKGKTKKESEQRA) the composition is skewed to basic and acidic residues. The tract at residues 219–243 (GKGKTKKESEQRAAESAYKQLKQIK) is disordered.

It belongs to the ribonuclease III family. Homodimer. It depends on Mg(2+) as a cofactor.

The protein resides in the cytoplasm. It carries out the reaction Endonucleolytic cleavage to 5'-phosphomonoester.. In terms of biological role, digests double-stranded RNA. Involved in the processing of primary rRNA transcript to yield the immediate precursors to the large and small rRNAs (23S and 16S). Processes some mRNAs, and tRNAs when they are encoded in the rRNA operon. Processes pre-crRNA and tracrRNA of type II CRISPR loci if present in the organism. The protein is Ribonuclease 3 of Staphylococcus aureus (strain USA300).